The chain runs to 492 residues: Catalase (492 aa).

Catalysis depends on residues His65 and Asn138. Tyr348 provides a ligand contact to heme.

It belongs to the catalase family. As to quaternary structure, homotetramer. The cofactor is heme.

The protein localises to the cytoplasm. It localises to the cytosol. It is found in the peroxisome matrix. The catalysed reaction is 2 H2O2 = O2 + 2 H2O. Its function is as follows. Catalyzes the degradation of hydrogen peroxide (H(2)O(2)) generated by peroxisomal oxidases to water and oxygen, thereby protecting cells from the toxic effects of hydrogen peroxide. This is Catalase from Ipomoea batatas (Sweet potato).